A 685-amino-acid polypeptide reads, in one-letter code: uncharacterized protein (685 aa).

Disordered stretches follow at residues 502 to 538 (NLNQ…SLNK) and 635 to 685 (RSKR…IHNA). The span at 518 to 538 (SSENMTKFPSSRGKSTVSLNK) shows a compositional bias: polar residues. The segment covering 675–685 (KLKKSLIIHNA) has biased composition (basic residues).

This is an uncharacterized protein from Homo sapiens (Human).